The primary structure comprises 319 residues: Tetrahydromethanopterin S-methyltransferase subunit H (319 aa).

This sequence belongs to the MtrH family. In terms of assembly, the complex is composed of 8 subunits; MtrA, MtrB, MtrC, MtrD, MtrE, MtrF, MtrG and MtrH.

The enzyme catalyses 5-methyl-5,6,7,8-tetrahydromethanopterin + coenzyme M + 2 Na(+)(in) = 5,6,7,8-tetrahydromethanopterin + methyl-coenzyme M + 2 Na(+)(out). The protein operates within one-carbon metabolism; methanogenesis from CO(2); methyl-coenzyme M from 5,10-methylene-5,6,7,8-tetrahydromethanopterin: step 2/2. Functionally, part of a complex that catalyzes the formation of methyl-coenzyme M and tetrahydromethanopterin from coenzyme M and methyl-tetrahydromethanopterin. This is an energy-conserving, sodium-ion translocating step. MtrH catalyzes the transfer of the methyl group from methyl-tetrahydromethanopterin to the corrinoid prosthetic group of MtrA. The chain is Tetrahydromethanopterin S-methyltransferase subunit H from Methanococcus vannielii (strain ATCC 35089 / DSM 1224 / JCM 13029 / OCM 148 / SB).